A 235-amino-acid polypeptide reads, in one-letter code: N,O-diacetylmuramidase (235 aa).

Positions 1–17 (MKLSLLTVAAAAGAAVA) are cleaved as a signal peptide. Residues 29-235 (SVQGFDISGY…DQLQRFAKGG (207 aa)) enclose the Ch-type lysozyme domain. Active-site residues include aspartate 34, aspartate 122, and glutamate 124. Cysteines 132 and 171 form a disulfide.

Belongs to the glycosyl hydrolase 25 family.

It localises to the secreted. The catalysed reaction is Hydrolysis of (1-&gt;4)-beta-linkages between N-acetylmuramic acid and N-acetyl-D-glucosamine residues in a peptidoglycan and between N-acetyl-D-glucosamine residues in chitodextrins.. Functionally, this enzyme has both lysozyme (acetylmuramidase) and diacetylmuramidase activities. This Arthroderma benhamiae (strain ATCC MYA-4681 / CBS 112371) (Trichophyton mentagrophytes) protein is N,O-diacetylmuramidase.